We begin with the raw amino-acid sequence, 481 residues long: Cysteine--tRNA ligase (481 aa).

Position 43 (Cys43) interacts with Zn(2+). Residues 45-55 (ATVQGLPHIGH) carry the 'HIGH' region motif. Zn(2+) contacts are provided by Cys221, His246, and Glu250. The short motif at 277–281 (KMSKS) is the 'KMSKS' region element. Lys280 contacts ATP.

The protein belongs to the class-I aminoacyl-tRNA synthetase family. In terms of assembly, monomer. Zn(2+) serves as cofactor.

The protein localises to the cytoplasm. The enzyme catalyses tRNA(Cys) + L-cysteine + ATP = L-cysteinyl-tRNA(Cys) + AMP + diphosphate. The chain is Cysteine--tRNA ligase from Mycobacterium sp. (strain KMS).